Consider the following 38-residue polypeptide: Mu-agatoxin-Hc1c (38 aa).

4 cysteine pairs are disulfide-bonded: Cys-3–Cys-19, Cys-10–Cys-24, Cys-18–Cys-34, and Cys-26–Cys-32. Ser-38 bears the Serine amide mark.

Belongs to the neurotoxin 07 (Beta/delta-agtx) family. 02 (aga-3) subfamily. Expressed by the venom gland.

Its subcellular location is the secreted. Functionally, insecticidal neurotoxin that induces irreversible neuromuscular blockade in house crickets (A.domesticus). Modifies presynaptic voltage-gated sodium channels (Nav), causing them to open at the normal resting potential of the nerve. This leads to spontaneous release of neurotransmitter and repetitive action potentials in motor neurons. This chain is Mu-agatoxin-Hc1c, found in Hololena curta (Funnel-web spider).